We begin with the raw amino-acid sequence, 882 residues long: Holliday junction resolvase MOC1, chloroplastic (882 aa).

2 disordered regions span residues 87 to 148 (IRDG…QTPT) and 323 to 351 (TPAA…PRAA). Residues 91–111 (PNSNSRCSTVRTHATRSKSTG) are compositionally biased toward polar residues. A compositionally biased stretch (low complexity) spans 112 to 125 (PSRATSSGPATAAP). Polar residues predominate over residues 134 to 148 (NDTQDGGLTSEQTPT). A compositionally biased stretch (low complexity) spans 323-337 (TPAAASQTPPTTVTS). Residues D397, E552, N629, and D634 each coordinate Mg(2+). Residues 710 to 882 (KVERKAQARS…DGGVSGSESE (173 aa)) are disordered. Over residues 732 to 743 (EEPEAQAEEEQA) the composition is skewed to acidic residues. Low complexity-rich tracts occupy residues 744–758 (EAGT…GAAA), 769–783 (VESG…VAAG), 810–819 (SGKSSSKAEA), and 830–844 (ASVG…SVGS). Composition is skewed to gly residues over residues 845–857 (SSGG…GGVK) and 868–882 (AKAG…SESE).

Mg(2+) is required as a cofactor. It depends on Mn(2+) as a cofactor.

Its subcellular location is the plastid. It localises to the chloroplast. It catalyses the reaction Endonucleolytic cleavage at a junction such as a reciprocal single-stranded crossover between two homologous DNA duplexes (Holliday junction).. In terms of biological role, a structure-specific endonuclease that resolves Holliday junction (HJ) intermediates during genetic recombination. Cleaves 4-way DNA junctions introducing paired nicks in opposing strands, leaving a 5'-terminal phosphate and a 3'-terminal hydroxyl group that are ligated to produce recombinant products. Mediates chloroplast nucleoid segregation during chloroplast division. This Chlamydomonas reinhardtii (Chlamydomonas smithii) protein is Holliday junction resolvase MOC1, chloroplastic.